The sequence spans 515 residues: Maturase K (515 aa).

The protein belongs to the intron maturase 2 family. MatK subfamily.

The protein localises to the plastid. It is found in the chloroplast. Functionally, usually encoded in the trnK tRNA gene intron. Probably assists in splicing its own and other chloroplast group II introns. The polypeptide is Maturase K (Alpinia calcarata (Snap ginger)).